A 247-amino-acid polypeptide reads, in one-letter code: Uridylate kinase (247 aa).

15–18 is a binding site for ATP; the sequence is KLSG. Residues 23–28 are involved in allosteric activation by GTP; that stretch reads GEEGFG. Gly-57 serves as a coordination point for UMP. Residues Gly-58 and Arg-62 each contribute to the ATP site. Residues Asp-77 and 138 to 145 contribute to the UMP site; that span reads TGNPFFTT. ATP contacts are provided by Thr-165, Tyr-171, and Asp-174.

This sequence belongs to the UMP kinase family. In terms of assembly, homohexamer.

Its subcellular location is the cytoplasm. It catalyses the reaction UMP + ATP = UDP + ADP. Its pathway is pyrimidine metabolism; CTP biosynthesis via de novo pathway; UDP from UMP (UMPK route): step 1/1. Its activity is regulated as follows. Allosterically activated by GTP. Inhibited by UTP. Functionally, catalyzes the reversible phosphorylation of UMP to UDP. The protein is Uridylate kinase of Pseudoalteromonas atlantica (strain T6c / ATCC BAA-1087).